The primary structure comprises 260 residues: Ubiquinone/menaquinone biosynthesis C-methyltransferase UbiE (260 aa).

Residues threonine 83, aspartate 104, and 132 to 133 (NA) contribute to the S-adenosyl-L-methionine site.

This sequence belongs to the class I-like SAM-binding methyltransferase superfamily. MenG/UbiE family.

It catalyses the reaction a 2-demethylmenaquinol + S-adenosyl-L-methionine = a menaquinol + S-adenosyl-L-homocysteine + H(+). The enzyme catalyses a 2-methoxy-6-(all-trans-polyprenyl)benzene-1,4-diol + S-adenosyl-L-methionine = a 5-methoxy-2-methyl-3-(all-trans-polyprenyl)benzene-1,4-diol + S-adenosyl-L-homocysteine + H(+). The protein operates within quinol/quinone metabolism; menaquinone biosynthesis; menaquinol from 1,4-dihydroxy-2-naphthoate: step 2/2. It participates in cofactor biosynthesis; ubiquinone biosynthesis. Methyltransferase required for the conversion of demethylmenaquinol (DMKH2) to menaquinol (MKH2) and the conversion of 2-polyprenyl-6-methoxy-1,4-benzoquinol (DDMQH2) to 2-polyprenyl-3-methyl-6-methoxy-1,4-benzoquinol (DMQH2). The polypeptide is Ubiquinone/menaquinone biosynthesis C-methyltransferase UbiE (Bartonella bacilliformis (strain ATCC 35685 / KC583 / Herrer 020/F12,63)).